The sequence spans 352 residues: MRVTTLSTALFALASTAVSAPTAGSSSPGLEVKLTQIDNTRVKAVVKNTGSEEVSFVHLNFFKDAGPVKKVSIYRGQDEVQFEGIKRRLRSSGITKEAVTSLGAGETLEDEFDIASTSDLASGGPVSIRSHGFVPIVVDGKITGYIPYKSNDLTVNVDGGKAAKVTKALSQLTRRTEVTDCKGDAESSLTTALSNAAKLANQAAEAAESGDESKFEEYFKTTDQQTRTTVAERLRAVAKEAGSTSGGSTTYHCNDPYGYCEPNVLAYTLPSKNEIANCDIYYSELPPLAQKCHAQDQATTTLHEFTHAPGVYQPGTEDLGYGYDAATQLSAQDALNNADSYALYANAIELKC.

The N-terminal stretch at 1-19 (MRVTTLSTALFALASTAVS) is a signal peptide. Positions 20-175 (APTAGSSSPG…TKALSQLTRR (156 aa)) are excised as a propeptide. 3 cysteine pairs are disulfide-bonded: Cys181/Cys253, Cys260/Cys278, and Cys292/Cys352. Position 303 (His303) interacts with Zn(2+). Glu304 is a catalytic residue. Residues His307 and Asp318 each coordinate Zn(2+).

This sequence belongs to the peptidase M35 family. Zn(2+) is required as a cofactor.

The catalysed reaction is Preferential cleavage of bonds with hydrophobic residues in P1'. Also 3-Asn-|-Gln-4 and 8-Gly-|-Ser-9 bonds in insulin B chain.. Metalloprotease that shows high activities on basic nuclear substrates such as histone and protamine. This Aspergillus oryzae (strain ATCC 42149 / RIB 40) (Yellow koji mold) protein is Neutral protease 2.